Here is a 121-residue protein sequence, read N- to C-terminus: Large ribosomal subunit protein bL12 (121 aa).

This sequence belongs to the bacterial ribosomal protein bL12 family. As to quaternary structure, homodimer. Part of the ribosomal stalk of the 50S ribosomal subunit. Forms a multimeric L10(L12)X complex, where L10 forms an elongated spine to which 2 to 4 L12 dimers bind in a sequential fashion. Binds GTP-bound translation factors.

Its function is as follows. Forms part of the ribosomal stalk which helps the ribosome interact with GTP-bound translation factors. Is thus essential for accurate translation. The polypeptide is Large ribosomal subunit protein bL12 (Streptococcus agalactiae serotype V (strain ATCC BAA-611 / 2603 V/R)).